Consider the following 583-residue polypeptide: uncharacterized protein (583 aa).

This is an uncharacterized protein from Acanthamoeba polyphaga (Amoeba).